Consider the following 899-residue polypeptide: Origin recognition complex subunit 5 (899 aa).

Disordered regions lie at residues 27–47, 100–166, and 194–238; these read FSSPKKSRKESPIFVQNNDDT, DRIN…EYKD, and KNLE…DGNL. Over residues 105-160 the composition is skewed to acidic residues; it reads SEEETNINDDNNDDNNGDYDDDNNSDDDDDNDDNNNNDDNNNDDDEDVDDFEDIKE. Residues 207-218 are compositionally biased toward low complexity; it reads SSDNSMTSSSEE. The span at 227–237 shows a compositional bias: basic and acidic residues; it reads ESDKESDKDGN. 303-310 is a binding site for ATP; sequence GLPGMGKT. The tract at residues 409–469 is disordered; the sequence is KRTTENIRSP…NNNSNNVRFN (61 aa). Residues 455 to 469 show a composition bias toward low complexity; that stretch reads KNNFNNNNSNNVRFN.

Belongs to the ORC5 family. As to quaternary structure, component of the origin recognition complex (ORC). Interacts with PCNA1; the interaction occurs during the trophozoite stage but not at the late schizont stage.

The protein localises to the nucleus. The catalysed reaction is ATP + H2O = ADP + phosphate + H(+). Its function is as follows. Component of the origin recognition complex (ORC) that binds origins of replication. The sequence is that of Origin recognition complex subunit 5 from Plasmodium falciparum (isolate 3D7).